We begin with the raw amino-acid sequence, 527 residues long: Putative pumilio homolog 13 (527 aa).

The tract at residues 22–51 (ENMTTAASSSQSQPPQMQSSKFHQPENHIH) is disordered. The segment covering 24 to 41 (MTTAASSSQSQPPQMQSS) has biased composition (low complexity). The 344-residue stretch at 184–527 (GVNNSWRSNE…GNKILEKLNI (344 aa)) folds into the PUM-HD domain. Pumilio repeat units lie at residues 205 to 243 (SMEN…MIFD), 244 to 279 (GLIV…LIVD), 283 to 321 (RHIS…RIMD), 322 to 357 (AISS…RLLE), 358 to 396 (VVSQ…RLIS), 397 to 432 (EVIE…LLVN), 433 to 468 (KLLR…IVVD), and 469 to 503 (LLRG…MLRY).

Its subcellular location is the cytoplasm. Sequence-specific RNA-binding protein that regulates translation and mRNA stability by binding the 3'-UTR of target mRNAs. This chain is Putative pumilio homolog 13 (APUM13), found in Arabidopsis thaliana (Mouse-ear cress).